Reading from the N-terminus, the 209-residue chain is Probable GTP-binding protein EngB (209 aa).

One can recognise an EngB-type G domain in the interval 12–203; sequence VSFEIIFVGR…RDRLHEMKRD (192 aa). GTP is bound by residues 20–27, 45–49, 62–65, 142–145, and 179–181; these read GRSNVGKS, GVTLR, DMPG, NKMD, and ISA. 2 residues coordinate Mg(2+): S27 and T47.

Belongs to the TRAFAC class TrmE-Era-EngA-EngB-Septin-like GTPase superfamily. EngB GTPase family. The cofactor is Mg(2+).

Functionally, necessary for normal cell division and for the maintenance of normal septation. This is Probable GTP-binding protein EngB from Methanosarcina barkeri (strain Fusaro / DSM 804).